Consider the following 454-residue polypeptide: Gastrin/cholecystokinin type B receptor (454 aa).

The Extracellular portion of the chain corresponds to 1–57 (MELLKPNRSVLGSGPGPGASLCRSGGPLLNGSGTGNLSCEPPRIRGAGTRELELAIR). Residues Asn-7, Asn-30, and Asn-36 are each glycosylated (N-linked (GlcNAc...) asparagine). The chain crosses the membrane as a helical span at residues 58 to 79 (VTLYAVIFLMSVGGNVLIIVVL). Residues 80 to 87 (GLSRRLRT) are Cytoplasmic-facing. Residues 88–109 (VTNAFLLSLAVSDLLLAVACMP) form a helical membrane-spanning segment. Residues 110–131 (FTLLPNLMGTFIFGTVVCKAVS) are Extracellular-facing. Residues Cys-127 and Cys-205 are joined by a disulfide bond. A helical membrane pass occupies residues 132 to 150 (YFMGVSVSVSTLSLVAIAL). The Cytoplasmic segment spans residues 151 to 170 (ERYSAICRPLQARVWQTRSH). Residues 171-189 (AARVIVATWMLSGLLMVPY) traverse the membrane as a helical segment. Topologically, residues 190-219 (PVYTAVQPAGPRVLQCMHRWPSARVRQTWS) are extracellular. The chain crosses the membrane as a helical span at residues 220 to 242 (VLLLLLLFFVPGVVMAVAYGLIS). Residues 243–340 (RELYLGLRFD…KLLAKKRVVR (98 aa)) are Cytoplasmic-facing. Residues 257–284 (SESQSRVGSQGGLPGGTGQGPAQANGRC) are disordered. Residues 265–275 (SQGGLPGGTGQ) are compositionally biased toward gly residues. The helical transmembrane segment at 341 to 362 (MLLVIVVLFFLCWLPVYSANTW) threads the bilayer. Over 363–380 (RAFDGPGAHRALSGAPIS) the chain is Extracellular. A helical transmembrane segment spans residues 381–401 (FIHLLTYASACVNPLVYCFMH). Topologically, residues 402 to 454 (RRFRQACLDTCTRCCPRPPRARPRPLPDEDPPTPSIASLSRLSYTTISTLGPG) are cytoplasmic. Cys-415 is lipidated: S-palmitoyl cysteine. Residues 422-441 (ARPRPLPDEDPPTPSIASLS) form a disordered region.

This sequence belongs to the G-protein coupled receptor 1 family.

It is found in the cell membrane. Functionally, receptor for gastrin and cholecystokinin. The CCK-B receptors occur throughout the central nervous system where they modulate anxiety, analgesia, arousal, and neuroleptic activity. This receptor mediates its action by association with G proteins that activate a phosphatidylinositol-calcium second messenger system. In Bos taurus (Bovine), this protein is Gastrin/cholecystokinin type B receptor (CCKBR).